The primary structure comprises 289 residues: Diaminopimelate epimerase (289 aa).

Asn17, Gln47, and Asn67 together coordinate substrate. Cys76 acts as the Proton donor in catalysis. Substrate-binding positions include 77 to 78 (GN), Asn164, Asn198, and 216 to 217 (ER). The active-site Proton acceptor is the Cys225. Residue 226–227 (GS) coordinates substrate.

This sequence belongs to the diaminopimelate epimerase family. Homodimer.

The protein localises to the cytoplasm. It catalyses the reaction (2S,6S)-2,6-diaminopimelate = meso-2,6-diaminopimelate. It participates in amino-acid biosynthesis; L-lysine biosynthesis via DAP pathway; DL-2,6-diaminopimelate from LL-2,6-diaminopimelate: step 1/1. Catalyzes the stereoinversion of LL-2,6-diaminopimelate (L,L-DAP) to meso-diaminopimelate (meso-DAP), a precursor of L-lysine and an essential component of the bacterial peptidoglycan. The chain is Diaminopimelate epimerase from Bradyrhizobium sp. (strain BTAi1 / ATCC BAA-1182).